A 249-amino-acid chain; its full sequence is Ribonuclease PH (249 aa).

Phosphate is bound by residues Arg-86 and 124-126 (GTR).

The protein belongs to the RNase PH family. Homohexameric ring arranged as a trimer of dimers.

It carries out the reaction tRNA(n+1) + phosphate = tRNA(n) + a ribonucleoside 5'-diphosphate. Phosphorolytic 3'-5' exoribonuclease that plays an important role in tRNA 3'-end maturation. Removes nucleotide residues following the 3'-CCA terminus of tRNAs; can also add nucleotides to the ends of RNA molecules by using nucleoside diphosphates as substrates, but this may not be physiologically important. Probably plays a role in initiation of 16S rRNA degradation (leading to ribosome degradation) during starvation. This chain is Ribonuclease PH, found in Clostridium botulinum (strain Eklund 17B / Type B).